Here is a 148-residue protein sequence, read N- to C-terminus: Large-conductance mechanosensitive channel (148 aa).

A run of 2 helical transmembrane segments spans residues 15 to 35 (LDMA…KSLV) and 84 to 104 (VGVF…VFLL).

Belongs to the MscL family. As to quaternary structure, homopentamer.

It is found in the cell inner membrane. In terms of biological role, channel that opens in response to stretch forces in the membrane lipid bilayer. May participate in the regulation of osmotic pressure changes within the cell. This chain is Large-conductance mechanosensitive channel, found in Nitratidesulfovibrio vulgaris (strain DSM 19637 / Miyazaki F) (Desulfovibrio vulgaris).